A 186-amino-acid chain; its full sequence is Ribosome-recycling factor (186 aa).

This sequence belongs to the RRF family.

It localises to the cytoplasm. Responsible for the release of ribosomes from messenger RNA at the termination of protein biosynthesis. May increase the efficiency of translation by recycling ribosomes from one round of translation to another. This is Ribosome-recycling factor from Burkholderia multivorans (strain ATCC 17616 / 249).